The following is a 1485-amino-acid chain: Formin BNR1 (1485 aa).

Disordered regions lie at residues 65 to 88 (HLPP…PTLH), 226 to 248 (HDDS…PTET), and 549 to 575 (ANTS…SFDE). A GBD/FH3 domain is found at 110 to 636 (NQIPPEEIVD…HVTNESRVIG (527 aa)). Polar residues predominate over residues 231-248 (TSKLSIESGGSSGAPTET). Residues 553–564 (LEEDELTPELED) show a composition bias toward acidic residues. Positions 660 to 734 (ARRAVAESKM…EQLQSPNNTA (75 aa)) form a coiled coil. Residues 746–874 (GNGTVASLKD…GFMNASAPPP (129 aa)) form a disordered region. The region spanning 953–1368 (VVPSIRPKNK…YEIRKKILED (416 aa)) is the FH2 domain. Coiled-coil stretches lie at residues 1240 to 1312 (HNIS…GELN) and 1351 to 1382 (QREE…ESAE). The interval 1447-1471 (LKRRMTTRKRTTDGETSPKSEQFMS) is disordered.

The protein belongs to the formin homology family. BNI1 subfamily. In terms of assembly, interacts with IQG1.

The protein localises to the bud neck. Its subcellular location is the cell septum. In terms of biological role, may organize microtubules by mediating spindle positioning and movement in the budding process. Required for cytokinesis and the maintenance of polarized hyphal growth. The chain is Formin BNR1 (BNR1) from Candida albicans (strain SC5314 / ATCC MYA-2876) (Yeast).